We begin with the raw amino-acid sequence, 474 residues long: tRNA-2-methylthio-N(6)-dimethylallyladenosine synthase (474 aa).

One can recognise an MTTase N-terminal domain in the interval 3–120; it reads KKLHIKTWGC…LPEMINSVRG (118 aa). Cys-12, Cys-49, Cys-83, Cys-157, Cys-161, and Cys-164 together coordinate [4Fe-4S] cluster. One can recognise a Radical SAM core domain in the interval 143–375; that stretch reads RAEGPTAFVS…QERINQQAMA (233 aa). The TRAM domain occupies 378–441; that stretch reads RRMLGTTQRI…PNSLRGKVVR (64 aa).

This sequence belongs to the methylthiotransferase family. MiaB subfamily. Monomer. [4Fe-4S] cluster serves as cofactor.

The protein localises to the cytoplasm. The enzyme catalyses N(6)-dimethylallyladenosine(37) in tRNA + (sulfur carrier)-SH + AH2 + 2 S-adenosyl-L-methionine = 2-methylsulfanyl-N(6)-dimethylallyladenosine(37) in tRNA + (sulfur carrier)-H + 5'-deoxyadenosine + L-methionine + A + S-adenosyl-L-homocysteine + 2 H(+). Functionally, catalyzes the methylthiolation of N6-(dimethylallyl)adenosine (i(6)A), leading to the formation of 2-methylthio-N6-(dimethylallyl)adenosine (ms(2)i(6)A) at position 37 in tRNAs that read codons beginning with uridine. This Escherichia coli (strain UTI89 / UPEC) protein is tRNA-2-methylthio-N(6)-dimethylallyladenosine synthase.